The following is a 337-amino-acid chain: Glyceraldehyde-3-phosphate dehydrogenase (337 aa).

Residues Arg-12–Ile-13, Asp-34, and Lys-79 contribute to the NAD(+) site. D-glyceraldehyde 3-phosphate contacts are provided by residues Ser-150–Thr-152, Thr-181, Thr-210–Gly-211, and Arg-233. Cys-151 (nucleophile) is an active-site residue. An NAD(+)-binding site is contributed by Asn-315.

Belongs to the glyceraldehyde-3-phosphate dehydrogenase family. In terms of assembly, homotetramer. As to expression, expressed in all tissues examined.

It localises to the cytoplasm. The enzyme catalyses D-glyceraldehyde 3-phosphate + phosphate + NAD(+) = (2R)-3-phospho-glyceroyl phosphate + NADH + H(+). The protein operates within carbohydrate degradation; glycolysis; pyruvate from D-glyceraldehyde 3-phosphate: step 1/5. This Lentinula edodes (Shiitake mushroom) protein is Glyceraldehyde-3-phosphate dehydrogenase (gpd).